We begin with the raw amino-acid sequence, 203 residues long: Probable cytochrome c oxidase subunit 3 (203 aa).

The next 5 helical transmembrane spans lie at 30-50, 71-91, 96-116, 143-163, and 179-199; these read IVWL…YFSA, VPVT…VFAA, IFGL…FVLG, ATGF…FLLV, and IVVS…FTVI.

The protein belongs to the cytochrome c oxidase subunit 3 family.

Its subcellular location is the cell membrane. It catalyses the reaction 4 Fe(II)-[cytochrome c] + O2 + 8 H(+)(in) = 4 Fe(III)-[cytochrome c] + 2 H2O + 4 H(+)(out). The polypeptide is Probable cytochrome c oxidase subunit 3 (ctaE) (Mycobacterium bovis (strain ATCC BAA-935 / AF2122/97)).